The chain runs to 224 residues: MRIFYGLLAFLVARQHDAQAIQARSDKEQPQTVVSGTAVQSVVPVQAQLGSGMGPSSSSSSASSASGGAGNSAFYPLGPNVMCSFLPRDFLDCKDPVDHRENATAQQEKKYGCLKFGGSTYEEVEHAMVWCTVFADIECYGNRTFLRAGVPCVRYTDHYFVTTLIYSMLLGFLGMDRFCLGQTGTAVGKLLTMGGVGVWWIIDVILLITNNLLPEDGSNWNPYV.

A signal peptide spans 1-18 (MRIFYGLLAFLVARQHDA). At 19–154 (QAIQARSDKE…FLRAGVPCVR (136 aa)) the chain is on the extracellular side. Residues N102 and N142 are each glycosylated (N-linked (GlcNAc...) asparagine). A helical transmembrane segment spans residues 155–175 (YTDHYFVTTLIYSMLLGFLGM). Residues 157–205 (DHYFVTTLIYSMLLGFLGMDRFCLGQTGTAVGKLLTMGGVGVWWIIDVI) enclose the TM2 domain. The Cytoplasmic segment spans residues 176 to 189 (DRFCLGQTGTAVGK). Residues 190-210 (LLTMGGVGVWWIIDVILLITN) form a helical membrane-spanning segment. Topologically, residues 211–224 (NLLPEDGSNWNPYV) are extracellular.

This sequence belongs to the TM2 family.

Its subcellular location is the membrane. Its function is as follows. Positive regulator of Notch signaling. Maternal neurogenic factor involved in Notch signaling-dependent neuroectodermal specification during early embryogenesis. Functions cooperatively with amx/TM2D3 and bisc/TM2D1. The polypeptide is TM2 domain-containing protein amaretto (Drosophila melanogaster (Fruit fly)).